The sequence spans 80 residues: Serine protease inhibitor Kazal-type 6 (80 aa).

The first 23 residues, methionine 1–glycine 23, serve as a signal peptide directing secretion. The residue at position 24 (glutamine 24) is a Pyrrolidone carboxylic acid. Positions glutamine 24 to cysteine 80 constitute a Kazal-like domain. 3 disulfide bridges follow: cysteine 30-cysteine 62, cysteine 40-cysteine 59, and cysteine 48-cysteine 80.

Seminal plasma.

The protein resides in the secreted. Its function is as follows. Serine protease inhibitor selective for kallikreins. Efficiently inhibits KLK4, KLK5, KLK6, KLK7, KLK12, KLK13 and KLK14. Doesn't inhibit KLK8. Inhibits acrosin, trypsin, and chymotrypsin. This chain is Serine protease inhibitor Kazal-type 6 (SPINK6), found in Bos taurus (Bovine).